The sequence spans 219 residues: Transmembrane protein 17A (219 aa).

Asn-18 and Asn-27 each carry an N-linked (GlcNAc...) asparagine glycan. 4 helical membrane passes run 56–76 (MMLY…LLML), 83–103 (LPVY…IFEV), 121–141 (LAGF…FFIT), and 153–173 (AVHS…FLAL).

This sequence belongs to the TMEM17 family. As to quaternary structure, part of the tectonic-like complex (also named B9 complex).

The protein localises to the cell projection. Its subcellular location is the cilium membrane. In terms of biological role, transmembrane component of the tectonic-like complex, a complex localized at the transition zone of primary cilia and acting as a barrier that prevents diffusion of transmembrane proteins between the cilia and plasma membranes. Required for ciliogenesis and sonic hedgehog/SHH signaling. The protein is Transmembrane protein 17A (tmem17a) of Danio rerio (Zebrafish).